A 214-amino-acid polypeptide reads, in one-letter code: MRVKHKPWAKDRLEEFPAIYIKNPEDFKGRWQEVFGNNNPIHIEIGSGKGQFISGMAKANPEINYIGIEMIESVLVSALDKAIEADVPNLRLVARDAKLLEECFEKGEIAQIYLNFSDPWPKKRHTKRRLTNPTFLTIYERLLPKAGEIHFKTDNRSLFEYSLVAFSEYNMLLTFVSLDLHNSDYEGNIKTEYEEKFSAKGFPIYRLEAKFDRN.

Residues glutamate 44, glutamate 69, aspartate 96, and aspartate 118 each contribute to the S-adenosyl-L-methionine site. Residue aspartate 118 is part of the active site. Residues lysine 122, aspartate 154, and 191 to 194 contribute to the substrate site; that span reads TEYE.

It belongs to the class I-like SAM-binding methyltransferase superfamily. TrmB family.

It catalyses the reaction guanosine(46) in tRNA + S-adenosyl-L-methionine = N(7)-methylguanosine(46) in tRNA + S-adenosyl-L-homocysteine. It participates in tRNA modification; N(7)-methylguanine-tRNA biosynthesis. Functionally, catalyzes the formation of N(7)-methylguanine at position 46 (m7G46) in tRNA. This Listeria welshimeri serovar 6b (strain ATCC 35897 / DSM 20650 / CCUG 15529 / CIP 8149 / NCTC 11857 / SLCC 5334 / V8) protein is tRNA (guanine-N(7)-)-methyltransferase.